The following is a 98-amino-acid chain: NADH-ubiquinone oxidoreductase chain 4L (98 aa).

3 helical membrane-spanning segments follow: residues methionine 1–methionine 21, leucine 31–isoleucine 51, and isoleucine 61–valine 81.

The protein belongs to the complex I subunit 4L family. In terms of assembly, core subunit of respiratory chain NADH dehydrogenase (Complex I) which is composed of 45 different subunits.

It localises to the mitochondrion inner membrane. It carries out the reaction a ubiquinone + NADH + 5 H(+)(in) = a ubiquinol + NAD(+) + 4 H(+)(out). Core subunit of the mitochondrial membrane respiratory chain NADH dehydrogenase (Complex I) which catalyzes electron transfer from NADH through the respiratory chain, using ubiquinone as an electron acceptor. Part of the enzyme membrane arm which is embedded in the lipid bilayer and involved in proton translocation. This is NADH-ubiquinone oxidoreductase chain 4L (MT-ND4L) from Chalinolobus tuberculatus (New Zealand long-tailed bat).